Here is a 385-residue protein sequence, read N- to C-terminus: Cytochrome b (385 aa).

The next 4 membrane-spanning stretches (helical) occupy residues 32-52 (FGSL…TLAM), 76-98 (WLVR…LHIG), 113-133 (TWAI…LGYV), and 179-199 (FFAL…MHLI). Histidine 82 and histidine 96 together coordinate heme b. 2 residues coordinate heme b: histidine 183 and histidine 197. Histidine 202 lines the a ubiquinone pocket. A run of 4 helical transmembrane segments spans residues 226-246 (FVFK…IFVF), 290-310 (LLGV…PITD), 322-342 (LSKV…QIGA), and 349-369 (FIEF…VIVP).

The protein belongs to the cytochrome b family. Fungal cytochrome b-c1 complex contains 10 subunits; 3 respiratory subunits, 2 core proteins and 5 low-molecular weight proteins. Cytochrome b-c1 complex is a homodimer. Requires heme b as cofactor.

It is found in the mitochondrion inner membrane. Component of the ubiquinol-cytochrome c reductase complex (complex III or cytochrome b-c1 complex) that is part of the mitochondrial respiratory chain. The b-c1 complex mediates electron transfer from ubiquinol to cytochrome c. Contributes to the generation of a proton gradient across the mitochondrial membrane that is then used for ATP synthesis. This chain is Cytochrome b (cob), found in Aspergillus terreus (strain NIH 2624 / FGSC A1156).